A 448-amino-acid polypeptide reads, in one-letter code: Rhodanese-like domain-containing protein 8, chloroplastic (448 aa).

The N-terminal 23 residues, 1–23 (MRVSPAATLSVSLTTPLPITLTK), are a transit peptide targeting the chloroplast. Residues 220–323 (SGKSYILLDV…YLKEEGTAEW (104 aa)) enclose the Rhodanese domain. C283 functions as the Cysteine persulfide intermediate in the catalytic mechanism.

The protein resides in the plastid. The protein localises to the chloroplast. The sequence is that of Rhodanese-like domain-containing protein 8, chloroplastic (STR8) from Arabidopsis thaliana (Mouse-ear cress).